The chain runs to 389 residues: Major outer membrane porin (389 aa).

The N-terminal stretch at 1–23 (MKKLLKSALLSAAFAGSVGSLQA) is a signal peptide.

This sequence belongs to the chlamydial porin (CP) (TC 1.B.2) family. As to quaternary structure, part of a disulfide cross-linked outer membrane complex (COMC) composed of the major outer membrane porin (MOMP), the small cysteine-rich protein (OmcA) and the large cysteine-rich periplasmic protein (OmcB).

The protein resides in the cell outer membrane. In terms of biological role, in elementary bodies (EBs, the infectious stage, which is able to survive outside the host cell) provides the structural integrity of the outer envelope through disulfide cross-links with the small cysteine-rich protein and the large cysteine-rich periplasmic protein. It has been described in publications as the Sarkosyl-insoluble COMC (Chlamydia outer membrane complex), and serves as the functional equivalent of peptidoglycan. Functionally, permits diffusion of specific solutes through the outer membrane. The sequence is that of Major outer membrane porin (ompA) from Chlamydia pneumoniae (Chlamydophila pneumoniae).